A 97-amino-acid chain; its full sequence is UPF0235 protein HAPS_1504 (97 aa).

The protein belongs to the UPF0235 family.

The polypeptide is UPF0235 protein HAPS_1504 (Glaesserella parasuis serovar 5 (strain SH0165) (Haemophilus parasuis)).